Reading from the N-terminus, the 162-residue chain is Ribonuclease P protein component (162 aa).

Residues 1 to 63 form a disordered region; sequence MDEKDLATQP…PPAAGGKLLS (63 aa). Basic and acidic residues predominate over residues 21–38; sequence GPHEDPRRQEGVEAEKAE.

Belongs to the RnpA family. As to quaternary structure, consists of a catalytic RNA component (M1 or rnpB) and a protein subunit.

It carries out the reaction Endonucleolytic cleavage of RNA, removing 5'-extranucleotides from tRNA precursor.. Its function is as follows. RNaseP catalyzes the removal of the 5'-leader sequence from pre-tRNA to produce the mature 5'-terminus. It can also cleave other RNA substrates such as 4.5S RNA. The protein component plays an auxiliary but essential role in vivo by binding to the 5'-leader sequence and broadening the substrate specificity of the ribozyme. The sequence is that of Ribonuclease P protein component from Thermus scotoductus.